The primary structure comprises 167 residues: NAD(P)H-quinone oxidoreductase subunit I, chloroplastic (167 aa).

2 consecutive 4Fe-4S ferredoxin-type domains span residues 55 to 84 (GRIH…VDWK) and 95 to 124 (LNYS…MTEE). [4Fe-4S] cluster contacts are provided by C64, C67, C70, C74, C104, C107, C110, and C114.

Belongs to the complex I 23 kDa subunit family. As to quaternary structure, NDH is composed of at least 16 different subunits, 5 of which are encoded in the nucleus. [4Fe-4S] cluster is required as a cofactor.

Its subcellular location is the plastid. The protein resides in the chloroplast thylakoid membrane. It catalyses the reaction a plastoquinone + NADH + (n+1) H(+)(in) = a plastoquinol + NAD(+) + n H(+)(out). The catalysed reaction is a plastoquinone + NADPH + (n+1) H(+)(in) = a plastoquinol + NADP(+) + n H(+)(out). In terms of biological role, NDH shuttles electrons from NAD(P)H:plastoquinone, via FMN and iron-sulfur (Fe-S) centers, to quinones in the photosynthetic chain and possibly in a chloroplast respiratory chain. The immediate electron acceptor for the enzyme in this species is believed to be plastoquinone. Couples the redox reaction to proton translocation, and thus conserves the redox energy in a proton gradient. The protein is NAD(P)H-quinone oxidoreductase subunit I, chloroplastic of Citrus sinensis (Sweet orange).